A 596-amino-acid chain; its full sequence is Serine/threonine-protein kinase PknH (596 aa).

Residues 1 to 373 lie on the Cytoplasmic side of the membrane; the sequence is MSDAQDSRVG…QTPRKTNPWP (373 aa). The Protein kinase domain occupies 16-276; the sequence is YHLKRLLGRG…DLALAAHEAL (261 aa). Residues 22 to 30 and Lys-45 each bind ATP; that span reads LGRGGMGEV. Catalysis depends on Asp-139, which acts as the Proton acceptor. Position 170 is a phosphothreonine (Thr-170). The tract at residues 292–368 is disordered; sequence QESTLPGTAA…PSPWAQTPRK (77 aa). The segment covering 307–318 has biased composition (pro residues); that stretch reads PTMPTVTPPPIQ. The helical transmembrane segment at 374–394 threads the bilayer; that stretch reads LVAGAAAVVLVLVLGAIGIWI. Residues 395–596 lie on the Extracellular side of the membrane; sequence ANRPKPVQPP…AKIVDKVNKE (202 aa).

Belongs to the protein kinase superfamily. Ser/Thr protein kinase family. In terms of processing, autophosphorylated on threonine and serine residues.

It localises to the cell membrane. It carries out the reaction L-seryl-[protein] + ATP = O-phospho-L-seryl-[protein] + ADP + H(+). The enzyme catalyses L-threonyl-[protein] + ATP = O-phospho-L-threonyl-[protein] + ADP + H(+). The chain is Serine/threonine-protein kinase PknH (pknH) from Mycobacterium bovis (strain ATCC BAA-935 / AF2122/97).